The sequence spans 147 residues: Sentan (147 aa).

Positions 14 to 34 (RLEGEPNPPAAPTSTLAPKNM) are disordered. The span at 25–34 (PTSTLAPKNM) shows a compositional bias: polar residues.

This sequence belongs to the S-100 family.

The protein resides in the cell projection. It localises to the cilium. May be a component of the linker structure that bridges the ciliary membrane and peripheral singlet microtubules. The polypeptide is Sentan (SNTN) (Bos taurus (Bovine)).